The primary structure comprises 500 residues: MQDQYILALDQGTTSSRAMLFDRQGNIVSIAQKEFEQIYPQPGWVEHDPQEIWSTQAGVAAEAVTRVGLNGTAIAAIGITNQRETTIVWDRETGHPIYNAIVWQDRRTADFCDKLKAQGLSEKVRAKTGLPIDSYFSATKIRWILDNVEGAREKARQGKLAFGTVDSWLVWNFTKHELHVTDVTNASRTMLFNIHTLDWDDELLDALEIPRSMLPQVRASSEIYGPTKTTVFASKIPLAGIAGDQQAALFGQMCTSSGMVKNTYGTGCFLMMNTGETPIESRNNLVTTIAWQVDGKVSYALEGSIFIAGAVVQWLRDGLGIIKSASEIEALAAGVPHTDGVYLVPAFAGLGAPHWNARARGSLFGVTRGTTSAHLARAALDSIAYQSLDVLKAMEADSGIRIGELRVDGGASANNLLMQFQADLLGVDAVRPRITETTALGAAYLAGLAIGYWQNVDELHSQWQLERRFAPSMQAEQVGSCLAGWQRAVRAAKAWADDTQ.

T13 contacts ADP. The ATP site is built by T13, T14, and S15. T13 is a binding site for sn-glycerol 3-phosphate. Residue R17 participates in ADP binding. The sn-glycerol 3-phosphate site is built by R83, E84, Y135, and D244. Glycerol-binding residues include R83, E84, Y135, D244, and Q245. ADP contacts are provided by T266 and G309. ATP is bound by residues T266, G309, Q313, and G410. Residues G410 and N414 each contribute to the ADP site.

This sequence belongs to the FGGY kinase family.

The enzyme catalyses glycerol + ATP = sn-glycerol 3-phosphate + ADP + H(+). It participates in polyol metabolism; glycerol degradation via glycerol kinase pathway; sn-glycerol 3-phosphate from glycerol: step 1/1. With respect to regulation, inhibited by fructose 1,6-bisphosphate (FBP). Its function is as follows. Key enzyme in the regulation of glycerol uptake and metabolism. Catalyzes the phosphorylation of glycerol to yield sn-glycerol 3-phosphate. This Burkholderia pseudomallei (strain K96243) protein is Glycerol kinase.